We begin with the raw amino-acid sequence, 587 residues long: Pyruvate decarboxylase 3 (587 aa).

Residues D48 and H135 each coordinate substrate. Residues D415–I496 are thiamine pyrophosphate binding. D464, N491, and G493 together coordinate Mg(2+). E497 contributes to the substrate binding site.

The protein belongs to the TPP enzyme family. In terms of assembly, homotetramer. It depends on a metal cation as a cofactor. Thiamine diphosphate is required as a cofactor.

The catalysed reaction is a 2-oxocarboxylate + H(+) = an aldehyde + CO2. In Oryza sativa subsp. indica (Rice), this protein is Pyruvate decarboxylase 3 (PDC3).